The following is a 452-amino-acid chain: Pup--protein ligase (452 aa).

Mg(2+) is bound at residue E9. ATP is bound at residue R53. Y55 contributes to the Mg(2+) binding site. D57 functions as the Proton acceptor in the catalytic mechanism. E63 provides a ligand contact to Mg(2+). T66 and W419 together coordinate ATP.

This sequence belongs to the Pup ligase/Pup deamidase family. Pup-conjugating enzyme subfamily.

It catalyses the reaction ATP + [prokaryotic ubiquitin-like protein]-L-glutamate + [protein]-L-lysine = ADP + phosphate + N(6)-([prokaryotic ubiquitin-like protein]-gamma-L-glutamyl)-[protein]-L-lysine.. Its pathway is protein degradation; proteasomal Pup-dependent pathway. It participates in protein modification; protein pupylation. In terms of biological role, catalyzes the covalent attachment of the prokaryotic ubiquitin-like protein modifier Pup to the proteasomal substrate proteins, thereby targeting them for proteasomal degradation. This tagging system is termed pupylation. The ligation reaction involves the side-chain carboxylate of the C-terminal glutamate of Pup and the side-chain amino group of a substrate lysine. In Mycobacterium leprae (strain Br4923), this protein is Pup--protein ligase.